A 1849-amino-acid polypeptide reads, in one-letter code: Immunoglobulin A1 protease autotransporter (1849 aa).

Residues 1-25 (MLNKKFKLNFIALTVAYALTPYTEA) form the signal peptide. The region spanning 26–343 (ALVRDDVDYQ…NIYKHEFAEK (318 aa)) is the Peptidase S6 domain. Residue Ser299 is part of the active site. Residues 998-1538 (VEKRNQTVDT…EPVELPTENA (541 aa)) form a disordered region. Residues 1004–1015 (TVDTTNITTPND) show a composition bias toward polar residues. Over residues 1066–1077 (EETNTANSTETA) the composition is skewed to low complexity. Polar residues-rich tracts occupy residues 1079–1097 (KSDT…VPSE) and 1138–1151 (VEAN…TQSE). Residues 1152–1166 (GKTEETQTAETKSEP) are compositionally biased toward basic and acidic residues. Polar residues predominate over residues 1167–1184 (TESVTVSENQPEKTVSQS). Residues 1185–1205 (TEDKVVVEKEEKAKVETEETQ) are compositionally biased toward basic and acidic residues. Over residues 1237-1268 (ALQQTQPTTVAAAETTSPNSKPAEETQQPSEK) the composition is skewed to polar residues. Positions 1291–1301 (ETAKVEKEKTQ) are enriched in basic and acidic residues. Low complexity-rich tracts occupy residues 1314–1330 (QEQP…PQAE), 1345–1361 (PQPQ…VPTT), and 1369–1381 (KPAA…AKPQ). Residues 1388–1437 (NVSTVNTKEPQSQTSATVSTEQPAKETSSNVEQPAPENSINTGSATTMTE) are compositionally biased toward polar residues. The segment covering 1438-1457 (TAEKSDKPQMETVTENDRQP) has biased composition (basic and acidic residues). Residues 1493 to 1513 (EETTVASTQETTVDNSVSTPK) are compositionally biased toward low complexity. One can recognise an Autotransporter domain in the interval 1597–1849 (NNEGQYNVWI…TAEVKLSFSF (253 aa)).

It is found in the periplasm. The protein localises to the secreted. It localises to the cell surface. Its subcellular location is the cell outer membrane. The catalysed reaction is Cleavage of immunoglobulin A molecules at certain Pro-|-Xaa bonds in the hinge region. No small molecule substrates are known.. Its function is as follows. Virulence factor; cleaves host immunoglobulin A producing intact Fc and Fab fragments. This Haemophilus influenzae protein is Immunoglobulin A1 protease autotransporter (iga).